A 218-amino-acid chain; its full sequence is Riboflavin kinase (218 aa).

The signal sequence occupies residues 1 to 19 (MFTWTIYVSLLLVLAGTFL). Mg(2+) contacts are provided by Thr72 and Asn74. Glu155 serves as the catalytic Nucleophile.

Belongs to the flavokinase family. The cofactor is Zn(2+). Requires Mg(2+) as cofactor.

The protein localises to the microsome. It is found in the mitochondrion inner membrane. The protein resides in the endoplasmic reticulum. The enzyme catalyses riboflavin + ATP = FMN + ADP + H(+). It functions in the pathway cofactor biosynthesis; FMN biosynthesis; FMN from riboflavin (ATP route): step 1/1. Catalyzes the phosphorylation of riboflavin (vitamin B2) to form flavin mononucleotide (FMN) coenzyme. The polypeptide is Riboflavin kinase (FMN1) (Saccharomyces cerevisiae (strain ATCC 204508 / S288c) (Baker's yeast)).